A 674-amino-acid polypeptide reads, in one-letter code: Tripartite terminase subunit 3 (674 aa).

The Walker A motif motif lies at 212-219 (VPRRHGKT). The short motif at 305–310 (LLLVDE) is the Walker B motif element. Glu-310 functions as the For ATPase activity in the catalytic mechanism. Catalysis depends on for nuclease activity residues Asp-463, Glu-534, and Asp-651.

This sequence belongs to the herpesviridae TRM3 protein family. Interacts with the terminase subunits TRM1 and TRM2. Interacts with portal protein.

It localises to the host nucleus. Its function is as follows. Component of the molecular motor that translocates viral genomic DNA in empty capsid during DNA packaging. Forms a tripartite terminase complex together with TRM1 and TRM2 in the host cytoplasm. Once the complex reaches the host nucleus, it interacts with the capsid portal vertex. This portal forms a ring in which genomic DNA is translocated into the capsid. TRM3 carries an RNase H-like nuclease activity that plays an important role for the cleavage of concatemeric viral DNA into unit length genomes. In Homo sapiens (Human), this protein is Tripartite terminase subunit 3.